We begin with the raw amino-acid sequence, 1274 residues long: Regulator of telomere elongation helicase 1 (1274 aa).

Residues 7 to 296 enclose the Helicase ATP-binding domain; sequence NGVTVDFPFQ…ARVAQHGELQ (290 aa). 42–49 is an ATP binding site; sequence SPTGTGKT. Cys-145, Cys-163, Cys-172, and Cys-207 together coordinate [4Fe-4S] cluster. Positions 151-167 match the Nuclear localization signal motif; the sequence is KKQESNHMQISLCRKKV. The DEAH box motif lies at 250–253; that stretch reads DEAH. Positions 871–877 match the Nuclear localization signal motif; it reads QRGGKKK. Disordered stretches follow at residues 982 to 1002, 1014 to 1038, and 1143 to 1198; these read NSLP…RREL, RQLD…SKGD, and ELPC…DDTI. The span at 1186 to 1196 shows a compositional bias: basic and acidic residues; that stretch reads QRPDQSARSDD.

This sequence belongs to the helicase family. RAD3/XPD subfamily. In terms of assembly, interacts with TERF1. Interacts (via PIP-box) with PCNA; the interaction is direct and essential for suppressing telomere fragility. Interacts with MMS19; the interaction mediates the association of RTEL1 with the cytosolic iron-sulfur protein assembly (CIA) complex.

It is found in the nucleus. It carries out the reaction ATP + H2O = ADP + phosphate + H(+). Its function is as follows. A probable ATP-dependent DNA helicase implicated in telomere-length regulation, DNA repair and the maintenance of genomic stability. Acts as an anti-recombinase to counteract toxic recombination and limit crossover during meiosis. Regulates meiotic recombination and crossover homeostasis by physically dissociating strand invasion events and thereby promotes noncrossover repair by meiotic synthesis dependent strand annealing (SDSA) as well as disassembly of D loop recombination intermediates. Also disassembles T loops and prevents telomere fragility by counteracting telomeric G4-DNA structures, which together ensure the dynamics and stability of the telomere. In Rattus norvegicus (Rat), this protein is Regulator of telomere elongation helicase 1 (Rtel1).